A 60-amino-acid polypeptide reads, in one-letter code: Protein translocase subunit SecE (60 aa).

The chain crosses the membrane as a helical span at residues I31–I51.

This sequence belongs to the SecE/SEC61-gamma family. In terms of assembly, component of the Sec protein translocase complex. Heterotrimer consisting of SecY, SecE and SecG subunits. The heterotrimers can form oligomers, although 1 heterotrimer is thought to be able to translocate proteins. Interacts with the ribosome. Interacts with SecDF, and other proteins may be involved. Interacts with SecA.

It is found in the cell membrane. Functionally, essential subunit of the Sec protein translocation channel SecYEG. Clamps together the 2 halves of SecY. May contact the channel plug during translocation. The sequence is that of Protein translocase subunit SecE from Staphylococcus epidermidis (strain ATCC 35984 / DSM 28319 / BCRC 17069 / CCUG 31568 / BM 3577 / RP62A).